A 620-amino-acid chain; its full sequence is Aspartic protease 1 (620 aa).

The Cytoplasmic segment spans residues M1–S110. The propeptide occupies M1–G258. The tract at residues Y27–L31 is important for proper cellular trafficking. A helical; Signal-anchor for type II membrane protein membrane pass occupies residues V111 to F131. The Lumenal segment spans residues S132–N620. A disordered region spans residues T138–R174. The segment covering P156–R165 has biased composition (polar residues). The region spanning Y275–A616 is the Peptidase A1 domain. Residues D293 and D476 contribute to the active site. C513 and C550 are joined by a disulfide.

It belongs to the peptidase A1 family. Post-translationally, proteolytically cleaved into the soluble active mature form by, at least, cysteine protease CPL. Undergoes at least four processing steps; the first cleavage removes the propeptide resulting in the production of a soluble 45 kDa protein, which is further processed into a 35 kDa form followed by an additional processing into the final active 30 kDa form.

The protein localises to the membrane. It is found in the vacuole. Its function is as follows. Aspartyl protease which is dispensable for protein degradation in the vacuolar compartment (VAC) or for tachyzoite and bradyzoite viability. The polypeptide is Aspartic protease 1 (Toxoplasma gondii).